The sequence spans 145 residues: Large ribosomal subunit protein uL11 (145 aa).

It belongs to the universal ribosomal protein uL11 family. In terms of assembly, part of the ribosomal stalk of the 50S ribosomal subunit. Interacts with L10 and the large rRNA to form the base of the stalk. L10 forms an elongated spine to which L12 dimers bind in a sequential fashion forming a multimeric L10(L12)X complex. One or more lysine residues are methylated.

Its function is as follows. Forms part of the ribosomal stalk which helps the ribosome interact with GTP-bound translation factors. This chain is Large ribosomal subunit protein uL11, found in Rickettsia akari (strain Hartford).